The following is a 157-amino-acid chain: uncharacterized protein (157 aa).

In terms of biological role, may be a DNA-binding protein involved in virion nucleoprotein condensation. This is an uncharacterized protein from Mycoplasma (Bacteriophage L2).